A 591-amino-acid polypeptide reads, in one-letter code: MTIAITDVVLRDAHQSLFATRLRLDDMLPIAAQLDDVGYGSLECWGGATFDACIRFLGEDPWLRLRELKKAMPKTPLQMLLRGQNLLGYRHYADDVVERFVERAVKNGMDVFRVFDAMNDPRNMKAALQAVRSHGAHAQGTLSYTTSPAHTLQTWLDLTEQLLETGVDSIAIKDMSGILTPMAAFELVSEIKKRFEVRLHLHCHATTGMAEMALLKAIEAGVDGVDTAISSMSATYGHPATEALVATLAGTEHDTGLDILKLENIAAYFREVRKKYHAFEGQLKGYDSRILVAQVPGGMLTNLESQLKQQNAADRLDQVLAEIPRVREDLGFIPLVTPTSQIVGTQAVLNVLTGERYKTIAKETAGILKGEYGHTPVPVNAALQARVLEGSAPVTCRPADLLKPELAELEADVRRQAQEKGITLAGNAIDDVLTVALFPQIGLKFLENRHNPAAFEPLPQAEAAQPVAKAEKPAASGIYTVEVEGKAFVVRVSDGGDISQLTTAVPAASSAPVQAAAPAGAGTPVTAPLAGNIWKVIATEGQSVAEGDVLLILEAMKMETEIRAAQAGTVRGIAVKSGDAVSVGDTLMTLA.

The Pyruvate carboxyltransferase domain maps to 3 to 263; the sequence is IAITDVVLRD…DTGLDILKLE (261 aa). One can recognise a Biotinyl-binding domain in the interval 518-591; the sequence is PAGAGTPVTA…SVGDTLMTLA (74 aa). K557 carries the N6-biotinyllysine modification.

In terms of assembly, composed of three chains (alpha, beta, and gamma). The cofactor is biotin.

It carries out the reaction oxaloacetate + 2 Na(+)(in) + H(+) = pyruvate + 2 Na(+)(out) + CO2. Functionally, catalyzes the decarboxylation of oxaloacetate coupled to Na(+) translocation. The protein is Oxaloacetate decarboxylase alpha chain (oadA1) of Salmonella typhi.